A 377-amino-acid chain; its full sequence is N5-carboxyaminoimidazole ribonucleotide synthase (377 aa).

Residues Arg93, Lys133, 138-144 (GYDGKGQ), 175-178 (EEFV), Glu183, His206, and 257-258 (NE) each bind ATP. The ATP-grasp domain occupies 97–287 (KALLDRAQVA…QFENHLRAVC (191 aa)).

It belongs to the PurK/PurT family. As to quaternary structure, homodimer.

The catalysed reaction is 5-amino-1-(5-phospho-beta-D-ribosyl)imidazole + hydrogencarbonate + ATP = 5-carboxyamino-1-(5-phospho-D-ribosyl)imidazole + ADP + phosphate + 2 H(+). It functions in the pathway purine metabolism; IMP biosynthesis via de novo pathway; 5-amino-1-(5-phospho-D-ribosyl)imidazole-4-carboxylate from 5-amino-1-(5-phospho-D-ribosyl)imidazole (N5-CAIR route): step 1/2. Functionally, catalyzes the ATP-dependent conversion of 5-aminoimidazole ribonucleotide (AIR) and HCO(3)(-) to N5-carboxyaminoimidazole ribonucleotide (N5-CAIR). The sequence is that of N5-carboxyaminoimidazole ribonucleotide synthase from Vibrio cholerae serotype O1 (strain ATCC 39315 / El Tor Inaba N16961).